Here is a 958-residue protein sequence, read N- to C-terminus: Voltage-gated inwardly rectifying potassium channel KCNH6 (958 aa).

The Cytoplasmic portion of the chain corresponds to 1–261 (MPVRRGHVAP…YSPFKAVWDW (261 aa)). Residues 41 to 70 (IIYCNDGFCELFGYSRVEVMQQPCTCDFLT) form the PAS domain. Residues 92–144 (CKVDILYYRKDASSFRCLVDVVPVKNEDGAVIMFILNFEDLAQLLAKCSSRSL) enclose the PAC domain. A helical membrane pass occupies residues 262–282 (LILLLVIYTAVFTPYSAAFLL). Residues 283–298 (SDQDESRRGACSYTCS) are Extracellular-facing. The helical transmembrane segment at 299–319 (PLTVVDLIVDIMFVVDIVINF) threads the bilayer. Over 320-340 (RTTYVNTNDEVVSHPRRIAVH) the chain is Cytoplasmic. The chain crosses the membrane as a helical span at residues 341 to 361 (YFKGWFLIDMVAAIPFDLLIF). The Extracellular portion of the chain corresponds to 362-370 (RTGSDETTT). The helical; Voltage-sensor transmembrane segment at 371–391 (LIGLLKTARLLRLVRVARKLD) threads the bilayer. The Cytoplasmic portion of the chain corresponds to 392–398 (RYSEYGA). The chain crosses the membrane as a helical span at residues 399–419 (AVLFLLMCTFALIAHWLACIW). Topologically, residues 420 to 463 (YAIGNVERPYLEHKIGWLDSLGVQLGKRYNGSDPASGPSVQDKY) are extracellular. Asn-449 is a glycosylation site (N-linked (GlcNAc...) (complex) asparagine). Residues 464–484 (VTALYFTFSSLTSVGFGNVSP) constitute an intramembrane region (pore-forming). The Selectivity filter motif lies at 476–481 (SVGFGN). Residues 485-490 (NTNSEK) are Extracellular-facing. The chain crosses the membrane as a helical span at residues 491–511 (VFSICVMLIGSLMYASIFGNV). The Cytoplasmic portion of the chain corresponds to 512–958 (SAIIQRLYSG…DPGFAGSWGH (447 aa)). The interval 594–694 (AFSGAGKGCL…IQRADLLEVL (101 aa)) is cNMP-binding domain. 2 disordered regions span residues 720-751 (GLHS…PPLS) and 845-910 (TTSP…PPLA). Residues 724-745 (SPRQAPGSQDHQGFFLSDNQSD) are compositionally biased toward polar residues.

The protein belongs to the potassium channel family. H (Eag) (TC 1.A.1.20) subfamily. Kv11.2/KCNH6 sub-subfamily. As to quaternary structure, the potassium channel is probably composed of a homo- or heterotetrameric complex of pore-forming alpha subunits that can associate only within their subfamily. In terms of tissue distribution, expressed in prolactin-secreting adenomas.

The protein resides in the cell membrane. It carries out the reaction K(+)(in) = K(+)(out). Pore-forming (alpha) subunit of voltage-gated inwardly rectifying potassium channel. Characterized by unusual gating kinetics by producing relatively small outward currents during membrane depolarization and large inward currents during subsequent repolarization which reflect a rapid inactivation during depolarization and quick recovery from inactivation but slow deactivation (closing) during repolarization. Activates even more slowly than KCNH2. The protein is Voltage-gated inwardly rectifying potassium channel KCNH6 of Homo sapiens (Human).